Here is a 346-residue protein sequence, read N- to C-terminus: Histone PARylation factor 1 (346 aa).

At Met-1 the chain carries N-acetylmethionine. A disordered region spans residues 1–23 (MVGGGGKRRPGGEGPQCEKTTDV). Lys-19 is modified (N6-acetyllysine). The residue at position 97 (Ser-97) is an ADP-ribosylserine. N6-acetyllysine is present on residues Lys-186 and Lys-233. Asp-235 is subject to PolyADP-ribosyl aspartic acid. An ADP-ribosyltyrosine modification is found at Tyr-238. Glu-240 carries the polyADP-ribosyl glutamic acid modification. The tract at residues 242–346 (PETDADLKRI…SQENIDQLAA (105 aa)) is interaction with PARP1. The active-site Proton donor is the Glu-284.

It belongs to the HPF1 family. In terms of assembly, interacts with PARP1 (via the PARP catalytic domain). Interacts with PARP2 (via the PARP catalytic domain). Interacts with core nucleosomes in a PARP1- and PARP2-dependent manner.

It is found in the chromosome. It localises to the nucleus. Cofactor for serine ADP-ribosylation that confers serine specificity on PARP1 and PARP2 and plays a key role in DNA damage response. Initiates the repair of double-strand DNA breaks: recruited to DNA damage sites by PARP1 and PARP2 and switches the amino acid specificity of PARP1 and PARP2 from aspartate or glutamate to serine residues, licensing serine ADP-ribosylation of target proteins. Serine ADP-ribosylation of target proteins, such as histones, promotes decompaction of chromatin and the recruitment of repair factors leading to the reparation of DNA strand breaks. Serine ADP-ribosylation of proteins constitutes the primary form of ADP-ribosylation of proteins in response to DNA damage. HPF1 acts by completing the active site of PARP1 and PARP2: forms a composite active site composed of residues from HPF1 and PARP1 or PARP2. While HPF1 promotes the initiation of serine ADP-ribosylation, it restricts the polymerase activity of PARP1 and PARP2 in order to limit the length of poly-ADP-ribose chains. HPF1 also promotes tyrosine ADP-ribosylation, probably by conferring tyrosine specificity on PARP1. This chain is Histone PARylation factor 1, found in Homo sapiens (Human).